The chain runs to 391 residues: G-patch domain-containing protein 1 (391 aa).

A G-patch domain is found at 15–61; that stretch reads KDSAAFKLMKSMGWEEGEGLGKDKQGIKGYVRVTNKQDTSGVGLDKP. 2 disordered regions span residues 80 to 132 and 212 to 307; these read VQAA…EKGK and KASE…PAKR. 2 stretches are compositionally biased toward acidic residues: residues 92 to 102 and 265 to 295; these read DDSDKEDESED and NSDD…DDDK. Residues 305 to 312 carry the Nuclear localization signal motif; sequence AKRKHDEI.

As to expression, strongly expressed in tissues with high cell proliferation activity that have a high demand for ribosome production such as shoot tips, leaves primordia, root tips and floral buds.

Its subcellular location is the nucleus. The protein localises to the nucleolus. Involved in ribosome biogenesis, required for normal progression of rRNA processing. Seems to promote cell proliferation in leaves. In Arabidopsis thaliana (Mouse-ear cress), this protein is G-patch domain-containing protein 1.